The primary structure comprises 94 residues: Integration host factor subunit beta (94 aa).

Belongs to the bacterial histone-like protein family. As to quaternary structure, heterodimer of an alpha and a beta chain.

In terms of biological role, this protein is one of the two subunits of integration host factor, a specific DNA-binding protein that functions in genetic recombination as well as in transcriptional and translational control. This chain is Integration host factor subunit beta, found in Photorhabdus laumondii subsp. laumondii (strain DSM 15139 / CIP 105565 / TT01) (Photorhabdus luminescens subsp. laumondii).